The primary structure comprises 235 residues: Leucyl/phenylalanyl-tRNA--protein transferase (235 aa).

The protein belongs to the L/F-transferase family.

It localises to the cytoplasm. It carries out the reaction N-terminal L-lysyl-[protein] + L-leucyl-tRNA(Leu) = N-terminal L-leucyl-L-lysyl-[protein] + tRNA(Leu) + H(+). The enzyme catalyses N-terminal L-arginyl-[protein] + L-leucyl-tRNA(Leu) = N-terminal L-leucyl-L-arginyl-[protein] + tRNA(Leu) + H(+). The catalysed reaction is L-phenylalanyl-tRNA(Phe) + an N-terminal L-alpha-aminoacyl-[protein] = an N-terminal L-phenylalanyl-L-alpha-aminoacyl-[protein] + tRNA(Phe). Functionally, functions in the N-end rule pathway of protein degradation where it conjugates Leu, Phe and, less efficiently, Met from aminoacyl-tRNAs to the N-termini of proteins containing an N-terminal arginine or lysine. The sequence is that of Leucyl/phenylalanyl-tRNA--protein transferase from Methylococcus capsulatus (strain ATCC 33009 / NCIMB 11132 / Bath).